Here is a 363-residue protein sequence, read N- to C-terminus: UDP-N-acetylglucosamine--N-acetylmuramyl-(pentapeptide) pyrophosphoryl-undecaprenol N-acetylglucosamine transferase (363 aa).

UDP-N-acetyl-alpha-D-glucosamine-binding positions include 13 to 15 (TGG), N125, R166, S195, I249, 268 to 273 (ALTVSE), and Q294.

This sequence belongs to the glycosyltransferase 28 family. MurG subfamily.

The protein resides in the cell inner membrane. It carries out the reaction di-trans,octa-cis-undecaprenyl diphospho-N-acetyl-alpha-D-muramoyl-L-alanyl-D-glutamyl-meso-2,6-diaminopimeloyl-D-alanyl-D-alanine + UDP-N-acetyl-alpha-D-glucosamine = di-trans,octa-cis-undecaprenyl diphospho-[N-acetyl-alpha-D-glucosaminyl-(1-&gt;4)]-N-acetyl-alpha-D-muramoyl-L-alanyl-D-glutamyl-meso-2,6-diaminopimeloyl-D-alanyl-D-alanine + UDP + H(+). The protein operates within cell wall biogenesis; peptidoglycan biosynthesis. Functionally, cell wall formation. Catalyzes the transfer of a GlcNAc subunit on undecaprenyl-pyrophosphoryl-MurNAc-pentapeptide (lipid intermediate I) to form undecaprenyl-pyrophosphoryl-MurNAc-(pentapeptide)GlcNAc (lipid intermediate II). This is UDP-N-acetylglucosamine--N-acetylmuramyl-(pentapeptide) pyrophosphoryl-undecaprenol N-acetylglucosamine transferase from Cellvibrio japonicus (strain Ueda107) (Pseudomonas fluorescens subsp. cellulosa).